The following is a 677-amino-acid chain: DNA ligase (677 aa).

NAD(+) contacts are provided by residues 35 to 39, 84 to 85, and glutamate 116; these read DAEYD and SL. Lysine 118 serves as the catalytic N6-AMP-lysine intermediate. 4 residues coordinate NAD(+): arginine 139, glutamate 176, lysine 295, and lysine 319. Zn(2+) contacts are provided by cysteine 413, cysteine 416, cysteine 431, and cysteine 437. The BRCT domain maps to 596–677; that stretch reads LDELPLAGQV…MLAMFADLEG (82 aa).

Belongs to the NAD-dependent DNA ligase family. LigA subfamily. Requires Mg(2+) as cofactor. The cofactor is Mn(2+).

The enzyme catalyses NAD(+) + (deoxyribonucleotide)n-3'-hydroxyl + 5'-phospho-(deoxyribonucleotide)m = (deoxyribonucleotide)n+m + AMP + beta-nicotinamide D-nucleotide.. Functionally, DNA ligase that catalyzes the formation of phosphodiester linkages between 5'-phosphoryl and 3'-hydroxyl groups in double-stranded DNA using NAD as a coenzyme and as the energy source for the reaction. It is essential for DNA replication and repair of damaged DNA. The polypeptide is DNA ligase (Pseudoalteromonas atlantica (strain T6c / ATCC BAA-1087)).